The chain runs to 546 residues: Chaperonin GroEL (546 aa).

ATP contacts are provided by residues 30–33, K51, 87–91, G415, and D495; these read TLGP and DGTTT.

It belongs to the chaperonin (HSP60) family. As to quaternary structure, forms a cylinder of 14 subunits composed of two heptameric rings stacked back-to-back. Interacts with the co-chaperonin GroES.

It is found in the cytoplasm. It carries out the reaction ATP + H2O + a folded polypeptide = ADP + phosphate + an unfolded polypeptide.. Functionally, together with its co-chaperonin GroES, plays an essential role in assisting protein folding. The GroEL-GroES system forms a nano-cage that allows encapsulation of the non-native substrate proteins and provides a physical environment optimized to promote and accelerate protein folding. In Brucella anthropi (strain ATCC 49188 / DSM 6882 / CCUG 24695 / JCM 21032 / LMG 3331 / NBRC 15819 / NCTC 12168 / Alc 37) (Ochrobactrum anthropi), this protein is Chaperonin GroEL.